The chain runs to 355 residues: tRNA (guanine-N(1)-)-methyltransferase (355 aa).

S-adenosyl-L-methionine contacts are provided by residues G109 and 129-134 (IGDYVL).

It belongs to the RNA methyltransferase TrmD family. In terms of assembly, homodimer.

Its subcellular location is the cytoplasm. It catalyses the reaction guanosine(37) in tRNA + S-adenosyl-L-methionine = N(1)-methylguanosine(37) in tRNA + S-adenosyl-L-homocysteine + H(+). Specifically methylates guanosine-37 in various tRNAs. This is tRNA (guanine-N(1)-)-methyltransferase from Chlamydia abortus (strain DSM 27085 / S26/3) (Chlamydophila abortus).